We begin with the raw amino-acid sequence, 915 residues long: Hexokinase HKDC1 (915 aa).

Positions methionine 1–lysine 20 are mitochondrial-binding peptide (MBP). 2 consecutive Hexokinase domains span residues glutamate 16–alanine 458 and glutamine 464–alanine 903. Residues arginine 30 and aspartate 84–lysine 89 each bind ATP. A hexokinase small subdomain 1 region spans residues aspartate 73–valine 207. Residue aspartate 84–arginine 91 participates in D-glucose 6-phosphate binding. D-glucose is bound by residues serine 155, threonine 172–lysine 173, and asparagine 208–aspartate 209. The segment at asparagine 208–serine 447 is hexokinase large subdomain 1. Residues aspartate 209 and threonine 232 each coordinate D-glucose 6-phosphate. Residues asparagine 235, glutamate 260, and glutamine 291–glutamate 294 contribute to the D-glucose site. Residue aspartate 413–threonine 415 participates in D-glucose 6-phosphate binding. Lysine 425–arginine 426 contacts ATP. D-glucose 6-phosphate contacts are provided by residues serine 449 and aspartate 532–threonine 536. Positions aspartate 521–valine 652 are hexokinase small subdomain 2. Aspartate 532–asparagine 537 provides a ligand contact to ATP. Residues serine 600–phenylalanine 601, threonine 617–lysine 618, and asparagine 653–aspartate 654 each bind D-glucose. Residues asparagine 653–aspartate 892 are hexokinase large subdomain 2. 2 residues coordinate D-glucose 6-phosphate: aspartate 654 and threonine 677. Residue threonine 677 participates in ATP binding. D-glucose contacts are provided by residues serine 679 to asparagine 680, glutamate 705, and glutamate 739. ATP contacts are provided by residues glycine 744–methionine 745, threonine 781–serine 785, and threonine 860–leucine 864. D-glucose 6-phosphate-binding positions include aspartate 858–threonine 860 and serine 894.

It belongs to the hexokinase family. Widely expressed. Detected in retina, brain, cerebellum, liver, lung, kidney, spleen, pancreas and intestine.

It localises to the cytoplasm. The protein localises to the mitochondrion membrane. It is found in the photoreceptor inner segment. It carries out the reaction a D-hexose + ATP = a D-hexose 6-phosphate + ADP + H(+). It catalyses the reaction D-glucose + ATP = D-glucose 6-phosphate + ADP + H(+). Its pathway is carbohydrate metabolism; hexose metabolism. It functions in the pathway carbohydrate degradation; glycolysis; D-glyceraldehyde 3-phosphate and glycerone phosphate from D-glucose: step 1/4. In terms of biological role, catalyzes the phosphorylation of hexose to hexose 6-phosphate, although at very low level compared to other hexokinases. Has low glucose phosphorylating activity compared to other hexokinases. Involved in glucose homeostasis and hepatic lipid accumulation. Required to maintain whole-body glucose homeostasis during pregnancy; however additional evidences are required to confirm this role. This Mus musculus (Mouse) protein is Hexokinase HKDC1.